Reading from the N-terminus, the 79-residue chain is Delta-hormotoxin-Cpt1a (79 aa).

An N-terminal signal peptide occupies residues 1–20 (MKTQVLAVFVLCVLFCLAES). The propeptide occupies 21 to 31 (RTTLNKRIDIA). Disulfide bonds link C36/C75, C38/C66, and C56/C76.

It belongs to the sea anemone sodium channel inhibitory toxin family.

It is found in the secreted. It localises to the nematocyst. Functionally, in neuromuscular preparation of crustaceans, the toxin increased neurotransmitter release, causing repetitive firing of the axons. May affect sodium channels (Nav). This is Delta-hormotoxin-Cpt1a from Calliactis parasitica (Sea anemone).